The chain runs to 89 residues: Helix-loop-helix protein 15 (89 aa).

Positions 1–32 are disordered; the sequence is MLMEDGGLDTTSEEYRKLSKAERRKRRRATPK. Residues 22-32 show a composition bias toward basic residues; it reads ERRKRRRATPK. Residues 32 to 45 form a basic motif region; it reads KYRNLHATRERIRV. In terms of domain architecture, bHLH spans 32–84; the sequence is KYRNLHATRERIRVESFNMAFSQLRALLPTLPVEKKLSKIEILRFSIAYISFL. Residues 46–84 form a helix-loop-helix motif region; the sequence is ESFNMAFSQLRALLPTLPVEKKLSKIEILRFSIAYISFL.

In terms of tissue distribution, expressed in sensory head neurons of the lateral ganglion.

It localises to the nucleus. Its function is as follows. Transcription factor which binds the E box motif 5'-CA[TC][AG]TG-3'. Involved in modulating physiological aging, probably by regulating expression of branched-chain amino acid transferase-1, bcat-1. The protein is Helix-loop-helix protein 15 of Caenorhabditis elegans.